The following is a 61-amino-acid chain: Small ribosomal subunit protein uS14 (61 aa).

Cys24, Cys27, Cys40, and Cys43 together coordinate Zn(2+).

It belongs to the universal ribosomal protein uS14 family. Zinc-binding uS14 subfamily. As to quaternary structure, part of the 30S ribosomal subunit. Contacts proteins S3 and S10. Zn(2+) is required as a cofactor.

Binds 16S rRNA, required for the assembly of 30S particles and may also be responsible for determining the conformation of the 16S rRNA at the A site. In Campylobacter hominis (strain ATCC BAA-381 / DSM 21671 / CCUG 45161 / LMG 19568 / NCTC 13146 / CH001A), this protein is Small ribosomal subunit protein uS14.